The following is an 89-amino-acid chain: Small ribosomal subunit protein bS20 (89 aa).

The protein belongs to the bacterial ribosomal protein bS20 family.

Its function is as follows. Binds directly to 16S ribosomal RNA. This chain is Small ribosomal subunit protein bS20, found in Stenotrophomonas maltophilia (strain K279a).